The primary structure comprises 140 residues: Nucleoside diphosphate kinase (140 aa).

Residues lysine 11, phenylalanine 59, arginine 87, threonine 93, arginine 104, and asparagine 114 each coordinate ATP. Histidine 117 serves as the catalytic Pros-phosphohistidine intermediate.

This sequence belongs to the NDK family. As to quaternary structure, homotetramer. Mg(2+) serves as cofactor.

It is found in the cytoplasm. The enzyme catalyses a 2'-deoxyribonucleoside 5'-diphosphate + ATP = a 2'-deoxyribonucleoside 5'-triphosphate + ADP. It carries out the reaction a ribonucleoside 5'-diphosphate + ATP = a ribonucleoside 5'-triphosphate + ADP. Major role in the synthesis of nucleoside triphosphates other than ATP. The ATP gamma phosphate is transferred to the NDP beta phosphate via a ping-pong mechanism, using a phosphorylated active-site intermediate. This is Nucleoside diphosphate kinase from Dinoroseobacter shibae (strain DSM 16493 / NCIMB 14021 / DFL 12).